Here is a 58-residue protein sequence, read N- to C-terminus: UPF0434 protein Daro_3207 (58 aa).

This sequence belongs to the UPF0434 family.

This is UPF0434 protein Daro_3207 from Dechloromonas aromatica (strain RCB).